Consider the following 623-residue polypeptide: Glutathione import ATP-binding protein GsiA (623 aa).

2 consecutive ABC transporter domains span residues 15–269 (VENL…RALL) and 314–564 (LRVR…RKLL). Residues 49–56 (GESGSGKS) and 357–364 (GESGSGKS) each bind ATP.

Belongs to the ABC transporter superfamily. Glutathione importer (TC 3.A.1.5.11) family. In terms of assembly, the complex is composed of two ATP-binding proteins (GsiA), two transmembrane proteins (GsiC and GsiD) and a solute-binding protein (GsiB).

The protein resides in the cell inner membrane. It catalyses the reaction glutathione(out) + ATP + H2O = glutathione(in) + ADP + phosphate + H(+). In terms of biological role, part of the ABC transporter complex GsiABCD involved in glutathione import. Responsible for energy coupling to the transport system. The sequence is that of Glutathione import ATP-binding protein GsiA from Shigella boydii serotype 4 (strain Sb227).